Reading from the N-terminus, the 152-residue chain is Ribosome maturation factor RimP (152 aa).

It belongs to the RimP family.

It is found in the cytoplasm. Functionally, required for maturation of 30S ribosomal subunits. The sequence is that of Ribosome maturation factor RimP from Desulfitobacterium hafniense (strain DSM 10664 / DCB-2).